We begin with the raw amino-acid sequence, 204 residues long: Holliday junction resolvase RecU (204 aa).

Residues Thr89, Asp91, Asp104, and Gln123 each contribute to the Mg(2+) site.

The protein belongs to the RecU family. Requires Mg(2+) as cofactor.

It localises to the cytoplasm. The catalysed reaction is Endonucleolytic cleavage at a junction such as a reciprocal single-stranded crossover between two homologous DNA duplexes (Holliday junction).. Functionally, endonuclease that resolves Holliday junction intermediates in genetic recombination. Cleaves mobile four-strand junctions by introducing symmetrical nicks in paired strands. Promotes annealing of linear ssDNA with homologous dsDNA. Required for DNA repair, homologous recombination and chromosome segregation. The protein is Holliday junction resolvase RecU of Leuconostoc mesenteroides subsp. mesenteroides (strain ATCC 8293 / DSM 20343 / BCRC 11652 / CCM 1803 / JCM 6124 / NCDO 523 / NBRC 100496 / NCIMB 8023 / NCTC 12954 / NRRL B-1118 / 37Y).